Consider the following 207-residue polypeptide: Thymidylate kinase (207 aa).

7–14 lines the ATP pocket; sequence GCEGTGKT.

Belongs to the thymidylate kinase family.

The catalysed reaction is dTMP + ATP = dTDP + ADP. Functionally, phosphorylation of dTMP to form dTDP in both de novo and salvage pathways of dTTP synthesis. This chain is Thymidylate kinase, found in Aster yellows witches'-broom phytoplasma (strain AYWB).